The following is a 338-amino-acid chain: Lipoate-protein ligase A (338 aa).

The region spanning 29-216 (SPNQRVLFLW…AFFAYYDEQV (188 aa)) is the BPL/LPL catalytic domain. Residues R71, 76–79 (GAVF), and K134 contribute to the ATP site. Residue K134 coordinates (R)-lipoate.

It belongs to the LplA family. In terms of assembly, monomer.

It localises to the cytoplasm. The catalysed reaction is L-lysyl-[lipoyl-carrier protein] + (R)-lipoate + ATP = N(6)-[(R)-lipoyl]-L-lysyl-[lipoyl-carrier protein] + AMP + diphosphate + H(+). Its pathway is protein modification; protein lipoylation via exogenous pathway; protein N(6)-(lipoyl)lysine from lipoate: step 1/2. It participates in protein modification; protein lipoylation via exogenous pathway; protein N(6)-(lipoyl)lysine from lipoate: step 2/2. Functionally, catalyzes both the ATP-dependent activation of exogenously supplied lipoate to lipoyl-AMP and the transfer of the activated lipoyl onto the lipoyl domains of lipoate-dependent enzymes. This chain is Lipoate-protein ligase A, found in Yersinia pseudotuberculosis serotype O:1b (strain IP 31758).